The primary structure comprises 147 residues: MKLDNLAPQPGAKKRKRRVGRGIAAGQGASCGFGMRGQKSRSGRPTRPGFEGGQMPLYRRVPKLKHFPLINRKFYTVVNVGALAGLAAGTEVTLESLMAVGIVTQNDGPLKILGDGELSVSLSVSAAAFTATAQQKIEAAGGSIALV.

The tract at residues 1-55 (MKLDNLAPQPGAKKRKRRVGRGIAAGQGASCGFGMRGQKSRSGRPTRPGFEGGQM) is disordered. The span at 23-35 (IAAGQGASCGFGM) shows a compositional bias: gly residues.

The protein belongs to the universal ribosomal protein uL15 family. In terms of assembly, part of the 50S ribosomal subunit.

In terms of biological role, binds to the 23S rRNA. In Synechococcus elongatus (strain ATCC 33912 / PCC 7942 / FACHB-805) (Anacystis nidulans R2), this protein is Large ribosomal subunit protein uL15.